Consider the following 94-residue polypeptide: Integration host factor subunit beta (94 aa).

Belongs to the bacterial histone-like protein family. In terms of assembly, heterodimer of an alpha and a beta chain.

This protein is one of the two subunits of integration host factor, a specific DNA-binding protein that functions in genetic recombination as well as in transcriptional and translational control. This is Integration host factor subunit beta from Serratia proteamaculans (strain 568).